A 491-amino-acid polypeptide reads, in one-letter code: F-box/LRR-repeat protein 7 (491 aa).

The disordered stretch occupies residues 1 to 79 (MGANNGKQYG…GRGSSTSSSS (79 aa)). Residues 10–26 (GSEGKGSSSISSDVSSS) are compositionally biased toward low complexity. Positions 27–55 (TDHTPTKAQKNVATSEDSDLSMRTLSTPS) are enriched in polar residues. Residues 111–157 (QASIDRLPDHSMVQIFSFLPTNQLCRCARVCRRWYNLAWDPRLWRTI) form the F-box domain. LRR repeat units follow at residues 170–195 (LKVL…TVSG), 196–221 (CRRL…EVSG), 222–247 (CYNI…DVSG), 253–281 (CISL…DMTD), 282–307 (CFVL…YLRR), 308–333 (CVRL…SVSD), 334–359 (CRFV…SIAH), 360–385 (CGRV…NARG), 386–411 (CEGI…DIGK), 412–437 (CPLV…SLKS), and 438–463 (CESI…NVQD).

This sequence belongs to the FBXL7 family. In terms of assembly, part of the SCF (SKP1-CUL1-F-box) E3 ubiquitin-protein ligase complex SCF(FBXL7) composed of CUL1, SKP1, RBX1 and FBXL7. Interacts with AURKA; interaction takes place during mitosis but not in interphase. Interacts with BIRC5; this interaction allows BIRC5 to be polyubiquitinated by the SCF(FBXL7) E3 ubiquitin-protein ligase complex.

Its subcellular location is the cytoplasm. It is found in the cytoskeleton. It localises to the microtubule organizing center. The protein localises to the centrosome. The protein operates within protein modification; protein ubiquitination. In terms of biological role, substrate recognition component of a SCF (SKP1-CUL1-F-box protein) E3 ubiquitin-protein ligase complex. During mitosis, it mediates the ubiquitination and subsequent proteasomal degradation of AURKA, causing mitotic arrest. It also regulates mitochondrial function by mediating the ubiquitination and proteasomal degradation of the apoptosis inhibitor BIRC5. This Homo sapiens (Human) protein is F-box/LRR-repeat protein 7 (FBXL7).